Consider the following 174-residue polypeptide: Crossover junction endodeoxyribonuclease RuvC (174 aa).

Active-site residues include Asp8, Glu69, and Asp141. Mg(2+) contacts are provided by Asp8, Glu69, and Asp141.

It belongs to the RuvC family. In terms of assembly, homodimer which binds Holliday junction (HJ) DNA. The HJ becomes 2-fold symmetrical on binding to RuvC with unstacked arms; it has a different conformation from HJ DNA in complex with RuvA. In the full resolvosome a probable DNA-RuvA(4)-RuvB(12)-RuvC(2) complex forms which resolves the HJ. Requires Mg(2+) as cofactor.

It is found in the cytoplasm. The catalysed reaction is Endonucleolytic cleavage at a junction such as a reciprocal single-stranded crossover between two homologous DNA duplexes (Holliday junction).. In terms of biological role, the RuvA-RuvB-RuvC complex processes Holliday junction (HJ) DNA during genetic recombination and DNA repair. Endonuclease that resolves HJ intermediates. Cleaves cruciform DNA by making single-stranded nicks across the HJ at symmetrical positions within the homologous arms, yielding a 5'-phosphate and a 3'-hydroxyl group; requires a central core of homology in the junction. The consensus cleavage sequence is 5'-(A/T)TT(C/G)-3'. Cleavage occurs on the 3'-side of the TT dinucleotide at the point of strand exchange. HJ branch migration catalyzed by RuvA-RuvB allows RuvC to scan DNA until it finds its consensus sequence, where it cleaves and resolves the cruciform DNA. The sequence is that of Crossover junction endodeoxyribonuclease RuvC from Xanthomonas oryzae pv. oryzae (strain MAFF 311018).